A 64-amino-acid polypeptide reads, in one-letter code: Large ribosomal subunit protein bL35 (64 aa).

This sequence belongs to the bacterial ribosomal protein bL35 family.

The polypeptide is Large ribosomal subunit protein bL35 (Kineococcus radiotolerans (strain ATCC BAA-149 / DSM 14245 / SRS30216)).